The primary structure comprises 377 residues: Odorant receptor 30a (377 aa).

At 1-34 the chain is on the cytoplasmic side; that stretch reads MELKSMDPVEMPIFGSTLKLMKFWSYLFVHNWRR. Residues 35 to 55 traverse the membrane as a helical segment; it reads YVAMTPYIIINCTQYVDIYLS. Over 56-65 the chain is Extracellular; it reads TESLDFIIRN. The chain crosses the membrane as a helical span at residues 66-86; sequence VYLAVLFTNTVVRGVLLCVQR. Over 87–127 the chain is Cytoplasmic; the sequence is FSYERFINILKSFYIELLQSDDPIINILVKETTRLSVLISR. A helical membrane pass occupies residues 128-148; sequence INLLMGCCTCIGFVTYPIFGS. Residues 149 to 172 lie on the Extracellular side of the membrane; that stretch reads ERVLPYGMYLPTIDEYKYASPYYE. A helical membrane pass occupies residues 173 to 193; sequence IFFVIQAIMAPMGCCMYIPYT. The Cytoplasmic segment spans residues 194-254; the sequence is NMVVTFTLFA…SMNALNTHLH (61 aa). The chain crosses the membrane as a helical span at residues 255 to 275; sequence LVEFLCFGAMLCVLLFSLIIA. The Extracellular portion of the chain corresponds to 276–280; sequence QTIAQ. The helical transmembrane segment at 281-301 threads the bilayer; it reads TVIVIAYMVMIFANSVVLYYV. Topologically, residues 302–344 are cytoplasmic; that stretch reads ANELYFQSFDIAIAAYESNWMDFDVDTQKTLKFLIMRSQKPLA. The chain crosses the membrane as a helical span at residues 345-365; the sequence is ILVGGTYPMNLKMLQSLLNAI. Over 366–377 the chain is Extracellular; sequence YSFFTLLRRVYG.

The protein belongs to the insect chemoreceptor superfamily. Heteromeric odorant receptor channel (TC 1.A.69) family. Or30a subfamily. Interacts with Orco. Complexes exist early in the endomembrane system in olfactory sensory neurons (OSNs), coupling these complexes to the conserved ciliary trafficking pathway.

The protein resides in the cell membrane. Its function is as follows. Odorant receptor which mediates acceptance or avoidance behavior, depending on its substrates. The odorant receptor repertoire encodes a large collection of odor stimuli that vary widely in identity, intensity, and duration. May form a complex with Orco to form odorant-sensing units, providing sensitive and prolonged odorant signaling and calcium permeability. Involved in the behavioral responses to propyl acetate and anisole. In Drosophila melanogaster (Fruit fly), this protein is Odorant receptor 30a (Or30a).